The chain runs to 732 residues: Elongation factor 2 (732 aa).

The region spanning glutamate 19 to isoleucine 260 is the tr-type G domain. GTP contacts are provided by residues alanine 28–threonine 35, aspartate 94–histidine 98, and asparagine 148–aspartate 151. The residue at position 597 (histidine 597) is a Diphthamide.

This sequence belongs to the TRAFAC class translation factor GTPase superfamily. Classic translation factor GTPase family. EF-G/EF-2 subfamily.

The protein resides in the cytoplasm. Its function is as follows. Catalyzes the GTP-dependent ribosomal translocation step during translation elongation. During this step, the ribosome changes from the pre-translocational (PRE) to the post-translocational (POST) state as the newly formed A-site-bound peptidyl-tRNA and P-site-bound deacylated tRNA move to the P and E sites, respectively. Catalyzes the coordinated movement of the two tRNA molecules, the mRNA and conformational changes in the ribosome. This is Elongation factor 2 (fusA) from Pyrococcus abyssi (strain GE5 / Orsay).